We begin with the raw amino-acid sequence, 254 residues long: Large ribosomal subunit protein uL2 (254 aa).

This sequence belongs to the universal ribosomal protein uL2 family. In terms of assembly, component of the large ribosomal subunit. Mature ribosomes consist of a small (40S) and a large (60S) subunit. The 40S subunit contains about 32 different proteins and 1 molecule of RNA (18S). The 60S subunit contains 45 different proteins and 3 molecules of RNA (25S, 5.8S and 5S).

It localises to the cytoplasm. Functionally, component of the ribosome, a large ribonucleoprotein complex responsible for the synthesis of proteins in the cell. The small ribosomal subunit (SSU) binds messenger RNAs (mRNAs) and translates the encoded message by selecting cognate aminoacyl-transfer RNA (tRNA) molecules. The large subunit (LSU) contains the ribosomal catalytic site termed the peptidyl transferase center (PTC), which catalyzes the formation of peptide bonds, thereby polymerizing the amino acids delivered by tRNAs into a polypeptide chain. The nascent polypeptides leave the ribosome through a tunnel in the LSU and interact with protein factors that function in enzymatic processing, targeting, and the membrane insertion of nascent chains at the exit of the ribosomal tunnel. The sequence is that of Large ribosomal subunit protein uL2 from Candida albicans (strain SC5314 / ATCC MYA-2876) (Yeast).